We begin with the raw amino-acid sequence, 102 residues long: Putative protein p7 (102 aa).

The polypeptide is Putative protein p7 (7) (Escherichia coli (Bacteriophage APSE-1)).